The following is a 53-amino-acid chain: UPF0391 membrane protein SG0393 (53 aa).

Transmembrane regions (helical) follow at residues 4–24 (WGII…GGLA) and 27–47 (AAWA…ISLF).

It belongs to the UPF0391 family.

It localises to the cell membrane. The chain is UPF0391 membrane protein SG0393 from Sodalis glossinidius (strain morsitans).